Consider the following 684-residue polypeptide: Threonine--tRNA ligase (684 aa).

Positions 1-66 (MTVPATDSWP…DTDAEVVPVA (66 aa)) constitute a TGS domain. Residues 261–567 (DHRKLGSELD…LTEHYAGAFP (307 aa)) are catalytic. The Zn(2+) site is built by Cys366, His417, and His544.

It belongs to the class-II aminoacyl-tRNA synthetase family. As to quaternary structure, homodimer. Requires Zn(2+) as cofactor.

It is found in the cytoplasm. It carries out the reaction tRNA(Thr) + L-threonine + ATP = L-threonyl-tRNA(Thr) + AMP + diphosphate + H(+). Catalyzes the attachment of threonine to tRNA(Thr) in a two-step reaction: L-threonine is first activated by ATP to form Thr-AMP and then transferred to the acceptor end of tRNA(Thr). Also edits incorrectly charged L-seryl-tRNA(Thr). The protein is Threonine--tRNA ligase of Mycobacterium avium (strain 104).